A 203-amino-acid polypeptide reads, in one-letter code: dCTP deaminase (203 aa).

Residues 105–110, aspartate 123, 131–133, glutamine 152, tyrosine 166, lysine 173, and glutamine 177 contribute to the dCTP site; these read RSSLGR and TLE. Glutamate 133 serves as the catalytic Proton donor/acceptor. The interval 164 to 203 is disordered; that stretch reads RPYGVERGSKYQDQDGPQASRIGSDPEFHSDENQAAEHES. Residues 166–176 are compositionally biased toward basic and acidic residues; sequence YGVERGSKYQD. The segment covering 187-203 has biased composition (basic and acidic residues); sequence SDPEFHSDENQAAEHES.

It belongs to the dCTP deaminase family. Homotrimer.

The catalysed reaction is dCTP + H2O + H(+) = dUTP + NH4(+). The protein operates within pyrimidine metabolism; dUMP biosynthesis; dUMP from dCTP (dUTP route): step 1/2. Functionally, catalyzes the deamination of dCTP to dUTP. This Halorubrum lacusprofundi (strain ATCC 49239 / DSM 5036 / JCM 8891 / ACAM 34) protein is dCTP deaminase.